We begin with the raw amino-acid sequence, 424 residues long: Histidine--tRNA ligase (424 aa).

This sequence belongs to the class-II aminoacyl-tRNA synthetase family. In terms of assembly, homodimer.

It localises to the cytoplasm. The enzyme catalyses tRNA(His) + L-histidine + ATP = L-histidyl-tRNA(His) + AMP + diphosphate + H(+). This Shewanella sediminis (strain HAW-EB3) protein is Histidine--tRNA ligase.